Consider the following 72-residue polypeptide: Conorfamide-Tx2 (72 aa).

The signal sequence occupies residues 1 to 19 (MSGRGFLLLALLLLVTVEA). The propeptide occupies 20 to 25 (TRVEKK). Positions 32 to 39 (AWSGPRNR) are positively charged region crucial for activity against MRGPRX1 receptors. Ile-43 bears the Isoleucine amide mark. The propeptide occupies 44–72 (GRRDMQSPLLSERLRFRALGFRQPSSQKQ).

This sequence belongs to the FARP (FMRFamide related peptide) family. In terms of tissue distribution, expressed by the venom duct.

The protein resides in the secreted. This peptide activates human sensory neuron-specific G-protein coupled receptors MRGPRX1, but not mouse receptors (EC(50)=0.54 uM). Compared with the agonist chloroquine (anti-malaria drug), it is 600-fold more potent. In vivo, induces itch sensation, since intradermal cheek injection into humanized transgenic mouse (mouse MRGPRX1 replaced by human MRGPRX1) induces scratching. In vivo, treatment of zebrafish larvae with high doses (10 uM) induces hypoactivity at the beginning of the experiment during the dark phase and hyperactivity in the strobe phase after one hour, even after the removal of the toxin from the solution. In Conus textile (Cloth-of-gold cone), this protein is Conorfamide-Tx2.